A 387-amino-acid chain; its full sequence is Protein disulfide isomerase pTAC5, chloroplastic (387 aa).

The transit peptide at 1-40 directs the protein to the chloroplast; the sequence is MASSSLPLSLPFPLRSLTSTTRSLPFQCSPLFFSIPSSIV. 2 coiled-coil regions span residues 72–106 and 143–163; these read EQRWIRERESLLQEISDLQLRIQSLESRNSQLGNS and REQIVEEVEEEEKRVIIAEEK. The CR-type zinc-finger motif lies at 318–387; sequence PVDRSESTNT…CDVCDGKKNL (70 aa).

In terms of assembly, interacts with HSP21; the formed complex associates with the plastid-encoded RNA polymerase (PEP) complex not only during transcription initiation, but also during elongation and termination, and with a stronger efficiency in illuminated chloroplasts. Binds to promoter regions of PEP-dependent genes, especially after a heat stress. Interacts with FLN2.

Its subcellular location is the plastid. It localises to the chloroplast stroma. It is found in the chloroplast nucleoid. The catalysed reaction is Catalyzes the rearrangement of -S-S- bonds in proteins.. In terms of biological role, exhibits zinc-dependent disulfide isomerase activity. Required for seedling and chloroplast development under heat stress, probably by maintaining plastid-encoded RNA polymerase (PEP)-dependent transcription. In Arabidopsis thaliana (Mouse-ear cress), this protein is Protein disulfide isomerase pTAC5, chloroplastic.